The primary structure comprises 160 residues: Major strawberry allergen Fra a 1.07 (160 aa).

Belongs to the BetVI family. Phosphorylated in vivo. Phosphorylation prevents its activity as ribonuclease. In terms of tissue distribution, highly expressed in roots. Expressed a low levels in ripe red fruits.

Possesses ribonuclease activity in vitro. This chain is Major strawberry allergen Fra a 1.07, found in Fragaria ananassa (Strawberry).